Reading from the N-terminus, the 354-residue chain is MGFLSDHPHTAITETIFRIVSSRDYTLEVELAPLIQLIKADHNDYNYTVNQEEAARALRKKIKYGNRLQQSRTLDLLDLFISQGVKFTVMYNDDKLLQRLRGMATNSENSGSGEKYEPRIIKKCAAYAISWLNYITQNNLENARAYSGLYQLGQTVKQRYSKSSRSRRSGGGSGGRSNFMDDSADDTLYQSNSLTSADRLYRIPQINMNKEAPRIRLIISDALASAVSLQNSLIGLPKGKFSTDDEEATSKFIQARAIRRKVLRYLQLVTEGEFLGSLIHANDELVAALTAYDDRSAQDDSSDESDHGSYDDGIYDENEQDNSRYIDSESSEEESLSSYQPSTISNPFGDHNKI.

In terms of domain architecture, VHS spans 15 to 161; it reads TIFRIVSSRD…LGQTVKQRYS (147 aa). Disordered regions lie at residues 160–184 and 296–354; these read YSKS…DDSA and SAQD…HNKI. Residues 296 to 310 show a composition bias toward basic and acidic residues; sequence SAQDDSSDESDHGSY.

It belongs to the LSB5 family. Interacts with SLA1 and LAS17.

The protein localises to the cytoplasm. Its subcellular location is the cell cortex. It localises to the cytoskeleton. Functionally, essential for the organization of the actin cytoskeleton, fluid phase endocytosis and vesicle trafficking, together with YSC84. This is LAS seventeen-binding protein 5 (LSB5) from Saccharomyces cerevisiae (strain ATCC 204508 / S288c) (Baker's yeast).